Here is a 483-residue protein sequence, read N- to C-terminus: Type 2 glycosyltransferase (483 aa).

Residues 21-41 (AVVYLSALFTPWFTAFCVLWL) form a helical membrane-spanning segment. Positions 156–158 (DDD) match the Dxd motif motif. A QxxxRW motif motif is present at residues 301–305 (QCSRW). N313 is a glycosylation site (N-linked (GlcNAc...) asparagine). The next 3 membrane-spanning stretches (helical) occupy residues 336–356 (IATFTSLAFVFDFLILAALWW), 369–389 (AIYAQLAFLAFSKVVKLVGLF), and 396–416 (IMFLPVSIIFGYFHGLIKIYA). A glycan (N-linked (GlcNAc...) asparagine) is linked at N421.

Belongs to the GT2 glycosyltransferase family.

It localises to the cell membrane. Its function is as follows. Glycosyltransferase that plays an important role in infection-related morphogenesis and pathogenesis. Involved in stress tolerance and hyphal hydrophobicity via its regulation of the expression of nydrophobin MPG1. May regulate growth, pathogenicity, and cell wall integrity (CWI) through glycosylation of heat shock protein SSB1, and other (unidentified) substrates may contribute to conidiation. Candidate proteins as potential substrates of GT2 include several heat shock proteins (SSB1/MGG_02503, MGG_06759 and MGG_06958), two coiled-coil domain-containing proteins (MGG_04321 and MGG_09571), aminopeptidase 2 (MGG_16472), and a nuclease domain-containing protein (MGG_12646). The polypeptide is Type 2 glycosyltransferase (Pyricularia oryzae (strain 70-15 / ATCC MYA-4617 / FGSC 8958) (Rice blast fungus)).